Here is a 619-residue protein sequence, read N- to C-terminus: Chaperone protein HscA homolog (619 aa).

This sequence belongs to the heat shock protein 70 family.

Its function is as follows. Chaperone involved in the maturation of iron-sulfur cluster-containing proteins. Has a low intrinsic ATPase activity which is markedly stimulated by HscB. The protein is Chaperone protein HscA homolog of Acinetobacter baumannii (strain ACICU).